Here is a 931-residue protein sequence, read N- to C-terminus: Protein translocase subunit SecA (931 aa).

ATP contacts are provided by residues Gln87, 105 to 109 (GEGKT), and Asp515. The Zn(2+) site is built by Cys915, Cys917, Cys926, and His927.

This sequence belongs to the SecA family. In terms of assembly, monomer and homodimer. Part of the essential Sec protein translocation apparatus which comprises SecA, SecYEG and auxiliary proteins SecDF-YajC and YidC. Zn(2+) serves as cofactor.

It localises to the cell inner membrane. The protein localises to the cytoplasm. The enzyme catalyses ATP + H2O + cellular proteinSide 1 = ADP + phosphate + cellular proteinSide 2.. Its function is as follows. Part of the Sec protein translocase complex. Interacts with the SecYEG preprotein conducting channel. Has a central role in coupling the hydrolysis of ATP to the transfer of proteins into and across the cell membrane, serving both as a receptor for the preprotein-SecB complex and as an ATP-driven molecular motor driving the stepwise translocation of polypeptide chains across the membrane. The sequence is that of Protein translocase subunit SecA from Burkholderia pseudomallei (strain K96243).